The following is a 350-amino-acid chain: D-alanine--D-alanine ligase (350 aa).

The ATP-grasp domain occupies 138 to 346; sequence KSAFSSAGLS…LEQLVHKLIQ (209 aa). 173-228 contributes to the ATP binding site; sequence ERELNYPCFVKPANLGSSVGISKVRSRQELEAGLEQAAALDPRLVVEQGVNAREVE. Mg(2+) contacts are provided by D299, E313, and N315.

The protein belongs to the D-alanine--D-alanine ligase family. Mg(2+) is required as a cofactor. Requires Mn(2+) as cofactor.

The protein localises to the cytoplasm. It catalyses the reaction 2 D-alanine + ATP = D-alanyl-D-alanine + ADP + phosphate + H(+). It functions in the pathway cell wall biogenesis; peptidoglycan biosynthesis. In terms of biological role, cell wall formation. The sequence is that of D-alanine--D-alanine ligase from Synechococcus sp. (strain CC9605).